We begin with the raw amino-acid sequence, 125 residues long: Small ribosomal subunit protein uS12m (125 aa).

The disordered stretch occupies residues 1–27 (MPTKNQLIRHGREEKRRTDRTRALDQC). The segment covering 10-23 (HGREEKRRTDRTRA) has biased composition (basic and acidic residues).

The protein belongs to the universal ribosomal protein uS12 family.

It localises to the mitochondrion. Its function is as follows. Protein S12 is involved in the translation initiation step. The chain is Small ribosomal subunit protein uS12m (RPS12) from Triticum aestivum (Wheat).